The chain runs to 910 residues: Valine--tRNA ligase (910 aa).

A 'HIGH' region motif is present at residues Pro-45–His-55. The 'KMSKS' region signature appears at Lys-554–Ser-558. Lys-557 is a binding site for ATP. Residues Asp-842 to Ser-910 are a coiled coil.

It belongs to the class-I aminoacyl-tRNA synthetase family. ValS type 1 subfamily. Monomer.

The protein resides in the cytoplasm. The enzyme catalyses tRNA(Val) + L-valine + ATP = L-valyl-tRNA(Val) + AMP + diphosphate. Its function is as follows. Catalyzes the attachment of valine to tRNA(Val). As ValRS can inadvertently accommodate and process structurally similar amino acids such as threonine, to avoid such errors, it has a 'posttransfer' editing activity that hydrolyzes mischarged Thr-tRNA(Val) in a tRNA-dependent manner. In Brucella melitensis biotype 1 (strain ATCC 23456 / CCUG 17765 / NCTC 10094 / 16M), this protein is Valine--tRNA ligase.